Consider the following 113-residue polypeptide: MEKPNYQLYRNTTLGQALQKTLDDFVGDQMIPDSLSKKIMDSFDKSINKILPHKAKNKVNFRADKLRAYRYCDNVWTFIVEQIDLRDAVEGGTVDRLKIVACDGQTKGQIGHA.

It belongs to the TFIIA subunit 2 family. TFIIA is a heterodimer of the large unprocessed subunit 1 and a small subunit gamma. It was originally believed to be a heterotrimer of an alpha, a beta and a gamma subunit.

The protein localises to the nucleus. Its function is as follows. TFIIA is a component of the transcription machinery of RNA polymerase II and plays an important role in transcriptional activation. TFIIA in a complex with TBP mediates transcriptional activity. The chain is Transcription initiation factor IIA subunit 2 from Caenorhabditis elegans.